A 167-amino-acid chain; its full sequence is Protein alc (167 aa).

Participates in the host transcription shutoff by causing premature termination of transcription from host DNA. Acts as a site-specific termination factor that abolishes transcript elongation on cytosine-containing DNA but not on the 5-hydroxymethyl cytosine present in the viral DNA. Therefore inhibits as well transcription from other phages that contain cytosine in their DNA. This is Protein alc (alc) from Enterobacteria phage T4 (Bacteriophage T4).